The chain runs to 266 residues: Tryptophan synthase alpha chain (266 aa).

Catalysis depends on proton acceptor residues Glu49 and Asp60.

Belongs to the TrpA family. In terms of assembly, tetramer of two alpha and two beta chains.

The enzyme catalyses (1S,2R)-1-C-(indol-3-yl)glycerol 3-phosphate + L-serine = D-glyceraldehyde 3-phosphate + L-tryptophan + H2O. It participates in amino-acid biosynthesis; L-tryptophan biosynthesis; L-tryptophan from chorismate: step 5/5. In terms of biological role, the alpha subunit is responsible for the aldol cleavage of indoleglycerol phosphate to indole and glyceraldehyde 3-phosphate. The chain is Tryptophan synthase alpha chain from Shewanella amazonensis (strain ATCC BAA-1098 / SB2B).